The following is a 254-amino-acid chain: tRNA (guanine-N(1)-)-methyltransferase (254 aa).

S-adenosyl-L-methionine is bound by residues G113 and 133 to 138 (LGDFVL).

This sequence belongs to the RNA methyltransferase TrmD family. Homodimer.

Its subcellular location is the cytoplasm. The enzyme catalyses guanosine(37) in tRNA + S-adenosyl-L-methionine = N(1)-methylguanosine(37) in tRNA + S-adenosyl-L-homocysteine + H(+). Specifically methylates guanosine-37 in various tRNAs. This Herpetosiphon aurantiacus (strain ATCC 23779 / DSM 785 / 114-95) protein is tRNA (guanine-N(1)-)-methyltransferase.